We begin with the raw amino-acid sequence, 243 residues long: Orotidine 5'-phosphate decarboxylase (243 aa).

Substrate contacts are provided by residues D19, K41, 69–78 (DLKFFDIPAT), T124, R185, Q194, G214, and R215. K71 acts as the Proton donor in catalysis.

The protein belongs to the OMP decarboxylase family. Type 1 subfamily. In terms of assembly, homodimer.

The catalysed reaction is orotidine 5'-phosphate + H(+) = UMP + CO2. It participates in pyrimidine metabolism; UMP biosynthesis via de novo pathway; UMP from orotate: step 2/2. Functionally, catalyzes the decarboxylation of orotidine 5'-monophosphate (OMP) to uridine 5'-monophosphate (UMP). The chain is Orotidine 5'-phosphate decarboxylase from Xanthomonas euvesicatoria pv. vesicatoria (strain 85-10) (Xanthomonas campestris pv. vesicatoria).